Reading from the N-terminus, the 441-residue chain is Methionine aminopeptidase 2A (441 aa).

Residues M1–Q103 form a disordered region. Residues A18 to T33 are compositionally biased toward polar residues. Positions D37–T62 are enriched in basic and acidic residues. The segment covering K63 to S76 has biased composition (basic residues). Residue H194 participates in substrate binding. A divalent metal cation-binding residues include D214, D225, and H294. H302 contributes to the substrate binding site. Residues E327 and E422 each contribute to the a divalent metal cation site.

It belongs to the peptidase M24A family. Methionine aminopeptidase eukaryotic type 2 subfamily. It depends on Co(2+) as a cofactor. Zn(2+) serves as cofactor. Requires Mn(2+) as cofactor. The cofactor is Fe(2+). Ubiquitous. Preferentially expressed in roots.

It localises to the cytoplasm. The catalysed reaction is Release of N-terminal amino acids, preferentially methionine, from peptides and arylamides.. Its function is as follows. Cotranslationally removes the N-terminal methionine from nascent proteins. The N-terminal methionine is often cleaved when the second residue in the primary sequence is small and uncharged (Met-Ala-, Cys, Gly, Pro, Ser, Thr, or Val). The protein is Methionine aminopeptidase 2A of Arabidopsis thaliana (Mouse-ear cress).